Reading from the N-terminus, the 170-residue chain is Shikimate kinase (170 aa).

An ATP-binding site is contributed by 15–20 (GAGKTT). Mg(2+) is bound at residue Thr19. Residues Asp37, Arg61, and Gly83 each coordinate substrate. Residue Arg121 participates in ATP binding. Arg140 contacts substrate.

The protein belongs to the shikimate kinase family. In terms of assembly, monomer. The cofactor is Mg(2+).

The protein localises to the cytoplasm. It carries out the reaction shikimate + ATP = 3-phosphoshikimate + ADP + H(+). It participates in metabolic intermediate biosynthesis; chorismate biosynthesis; chorismate from D-erythrose 4-phosphate and phosphoenolpyruvate: step 5/7. Catalyzes the specific phosphorylation of the 3-hydroxyl group of shikimic acid using ATP as a cosubstrate. This chain is Shikimate kinase, found in Neisseria meningitidis serogroup C (strain 053442).